Consider the following 856-residue polypeptide: Lon protease (856 aa).

The 194-residue stretch at 68–261 (FPVLPLRDIV…KVLGLMESEI (194 aa)) folds into the Lon N-terminal domain. ATP is bound at residue 412 to 419 (GPPGVGKT). The Lon proteolytic domain maps to 647-828 (EDQVGVVTGL…DEVLHHALLR (182 aa)). Active-site residues include Ser734 and Lys777.

This sequence belongs to the peptidase S16 family. As to quaternary structure, homohexamer. Organized in a ring with a central cavity.

It localises to the cytoplasm. The catalysed reaction is Hydrolysis of proteins in presence of ATP.. Its function is as follows. ATP-dependent serine protease that mediates the selective degradation of mutant and abnormal proteins as well as certain short-lived regulatory proteins. Required for cellular homeostasis and for survival from DNA damage and developmental changes induced by stress. Degrades polypeptides processively to yield small peptide fragments that are 5 to 10 amino acids long. Binds to DNA in a double-stranded, site-specific manner. The polypeptide is Lon protease (Azorhizobium caulinodans (strain ATCC 43989 / DSM 5975 / JCM 20966 / LMG 6465 / NBRC 14845 / NCIMB 13405 / ORS 571)).